Reading from the N-terminus, the 1383-residue chain is MDEGVNLVFHKKVIDGTAIKRLISRLIDHFGMAHTSHILDQVKTLGFQQATATSISLGIDDLLTIPSKGWLVQDAEQQSLSLEKHHHYGNVHAVEKLRQSIEVWYATSEYLRQEMNPNFRMTDPFNPVHIMSFSGARGNASQVHQLVGMRGLMSDPQGQMIDLPIQSNLREGLSLTEYIISCYGARKGVVDTAVRTSDAGYLTRRLVEVVQHIVVRRTDCGTLRGISVSPRRMPERIFIQTLIGRVLADDIYIGSRCIAIRNQDIGIGLVNRFITFRIQPISIRTPFTCRSTSWICRLCYGRSPTHGDLVELGEAVGIIAGQSIGEPGTQLTLRTFHTGGVFTGGTAEHVRAPSNGKIKFNFNEALVHPARTRHGHPALLCSMDLDVTIESEDILHNLTIPPKSFLLVQNNQYVESEQVIAEICAGTSTFHFKERVRKHIYSDSEGEMHWSTDVYHAPEFTYSNVHLLPKTSHLWILSGGSCRSRGAPFSLHKDQDQMNPRSTERERRYLSSLSANNDQIRYKFFSSSFSGKKKDDRSPGYSEMNRIICTLHCNLIYPSILRENSDLLAKRRRNRLVIPVQSSQEREKELIPHSGISIELPINGIFRKKSILAFFDDPRYRTKSSGITQYETMGMHSIVKKEGLVDYRGINEFKPKYQMTIDRFFFIPEEVHILPESSSIMVRNNSLIGVDTRIALNTRSRAGGLVRVERKKRGIALQIFSGTIHFPGETDKISWDSGILIPPGTGKRNSKESKKWKNGIYVQRITPTKKKHFVLFRPVVTYEIADGLNLARLFPPDLCQEKDNMQLQIVNYIVYGNGKPIREISDTSIQLVRTWFILNWDQDKKSASAEAAHASFVEVRAKGLIRDFLRIDLVKSPILDPRKRNDPSGSGLISDNVSDHTNINPFYSKPKMKQSPRQNHGTIRTLLNQNKECPSLMILSASNCFRMGPFNDVKSQNVIKESIKKDAIIQIRNSIGPLGTALQVVNFDSFYYFITHNQVLLTKYLQVENLKQTFQVLQYYLMDESGRIYNPDPRSNIVLNSFNLSWYFLPHNNYENSCEEISTIVSLGQFICENGCIAKNGPYLRSGQVLIVQLDSVVIRSAKPYLATPGATVHGHYGEILYDGDTVVTFLYEKSRSGDITQGLPKVEQVLEVRSVDSISVNLEKRVENWNEHITRILGFPWGFLIGAELTIVQSRISLVNKIQKVYRSQGVQIHNRHIEIIVRQITSKVLVSEDGMSNVFLPRELIGLLRAERTGRALEESICYKAFLLGITRTSLNTQSFISEASFQETARVLAKAALRGRIDWLKGLKENVVIGGMIPVGTGFKGLVHCSKQHKSIPKNKHFFEGEIRDILFHHRELFDSCISKNFHDTPEQSFRVFNDS.

Zn(2+)-binding residues include cysteine 220, cysteine 289, cysteine 296, and cysteine 299.

It belongs to the RNA polymerase beta' chain family. RpoC2 subfamily. In terms of assembly, in plastids the minimal PEP RNA polymerase catalytic core is composed of four subunits: alpha, beta, beta', and beta''. When a (nuclear-encoded) sigma factor is associated with the core the holoenzyme is formed, which can initiate transcription. Requires Zn(2+) as cofactor.

It localises to the plastid. The protein localises to the chloroplast. It carries out the reaction RNA(n) + a ribonucleoside 5'-triphosphate = RNA(n+1) + diphosphate. Functionally, DNA-dependent RNA polymerase catalyzes the transcription of DNA into RNA using the four ribonucleoside triphosphates as substrates. This chain is DNA-directed RNA polymerase subunit beta'', found in Oenothera elata subsp. hookeri (Hooker's evening primrose).